Here is a 214-residue protein sequence, read N- to C-terminus: MTGTVTSVRQPPEWAAVTIVAAGQRMDARGWVPATAGNISVRLPDDTIAITSSGNHKGFLKTSDIMVVDQAGKPLTPGLKPSAETLLHCQIYRLDNQAGAVVHGHSVAATVLSMAPGKNDAPPDFIRLEGYEVLKAFGVKTHQITLDLPILDNDQDMERLASIAEPILLRGAPLGYLIRGHGVYVWGGDMAAALARLEGLEFLLACELERRRLR.

Residues His-103 and His-105 each contribute to the Zn(2+) site.

The protein belongs to the aldolase class II family. MtnB subfamily. It depends on Zn(2+) as a cofactor.

It carries out the reaction 5-(methylsulfanyl)-D-ribulose 1-phosphate = 5-methylsulfanyl-2,3-dioxopentyl phosphate + H2O. It functions in the pathway amino-acid biosynthesis; L-methionine biosynthesis via salvage pathway; L-methionine from S-methyl-5-thio-alpha-D-ribose 1-phosphate: step 2/6. Catalyzes the dehydration of methylthioribulose-1-phosphate (MTRu-1-P) into 2,3-diketo-5-methylthiopentyl-1-phosphate (DK-MTP-1-P). This Granulibacter bethesdensis (strain ATCC BAA-1260 / CGDNIH1) protein is Methylthioribulose-1-phosphate dehydratase.